Reading from the N-terminus, the 244-residue chain is Probable phosphatase CA_C0509 (244 aa).

Residues His-8, His-10, His-16, His-41, Glu-74, His-102, His-132, Asp-193, and His-195 each contribute to the Zn(2+) site.

The protein belongs to the PHP family. Zn(2+) is required as a cofactor.

This is Probable phosphatase CA_C0509 from Clostridium acetobutylicum (strain ATCC 824 / DSM 792 / JCM 1419 / IAM 19013 / LMG 5710 / NBRC 13948 / NRRL B-527 / VKM B-1787 / 2291 / W).